We begin with the raw amino-acid sequence, 687 residues long: Immune inhibitor A (687 aa).

Residues 1–12 are compositionally biased toward basic and acidic residues; it reads MKDAKADTKEKL. The segment at residues 1 to 25 is a signal peptide (or 32); sequence MKDAKADTKEKLNQPATGTPAATGP. The disordered stretch occupies residues 1 to 43; it reads MKDAKADTKEKLNQPATGTPAATGPVKGGLNGKVPTSPAKQKA. Residues 26 to 40 constitute a propeptide that is removed on maturation; that stretch reads VKGGLNGKVPTSPAK. Residue His266 coordinates Zn(2+). Residue Glu267 is part of the active site. His270 is a binding site for Zn(2+).

It belongs to the peptidase M6 family. Requires Zn(2+) as cofactor. Ca(2+) is required as a cofactor.

It localises to the secreted. In terms of biological role, neutral metalloprotease that is secreted to degrade antibacterial proteins produced by the insect host for its defense (attacins and cecropins). Probably degrades some unknown crucial protein(s) too, since it is toxic when injected to insect larvae. This Bacillus thuringiensis subsp. alesti protein is Immune inhibitor A (ina).